Here is a 533-residue protein sequence, read N- to C-terminus: Subtilisin-like protease 1 (533 aa).

The signal sequence occupies residues 1 to 19 (MGVFRFISISLAAVSAANA). Residues 20–116 (AQILSMPHAQ…VEPDTIISVH (97 aa)) constitute a propeptide that is removed on maturation. In terms of domain architecture, Inhibitor I9 spans 34 to 115 (SYIVMMKDDT…FVEPDTIISV (82 aa)). One can recognise a Peptidase S8 domain in the interval 126-400 (SWGLARISNP…NVLINNGGAK (275 aa)). Active-site charge relay system residues include Asp158 and His190. Residues 175-198 (GSNQVNDGDDRDGSGHGTHTSGTM) are disordered. Asn233 and Asn251 each carry an N-linked (GlcNAc...) asparagine glycan. Residues 282–294 (NDNQDAQSSSPAS) show a composition bias toward polar residues. Residues 282 to 312 (NDNQDAQSSSPASEPSVCTVGSSAEDDSRSS) are disordered. Ser345 functions as the Charge relay system in the catalytic mechanism. The span at 378–394 (TSSITDAGPGTPTNVLI) shows a compositional bias: polar residues. Residues 378-512 (TSSITDAGPG…YPGGDNFDFD (135 aa)) form a disordered region. The span at 405–470 (NPNPAPSPSP…FPGEPFPGEP (66 aa)) shows a compositional bias: pro residues. Residues 471–487 (FPGESFPGESFPGESAP) are compositionally biased toward low complexity. Positions 488 to 502 (APAPMPPSPQHPHTP) are enriched in pro residues.

Belongs to the peptidase S8 family.

The protein resides in the secreted. Its function is as follows. Secreted subtilisin-like serine protease with keratinolytic activity that contributes to pathogenicity. This Arthroderma benhamiae (strain ATCC MYA-4681 / CBS 112371) (Trichophyton mentagrophytes) protein is Subtilisin-like protease 1 (SUB1).